The chain runs to 361 residues: Histidinol-phosphate aminotransferase (361 aa).

Lys-216 carries the post-translational modification N6-(pyridoxal phosphate)lysine.

The protein belongs to the class-II pyridoxal-phosphate-dependent aminotransferase family. Histidinol-phosphate aminotransferase subfamily. In terms of assembly, homodimer. Requires pyridoxal 5'-phosphate as cofactor.

The catalysed reaction is L-histidinol phosphate + 2-oxoglutarate = 3-(imidazol-4-yl)-2-oxopropyl phosphate + L-glutamate. It participates in amino-acid biosynthesis; L-histidine biosynthesis; L-histidine from 5-phospho-alpha-D-ribose 1-diphosphate: step 7/9. The chain is Histidinol-phosphate aminotransferase from Francisella philomiragia subsp. philomiragia (strain ATCC 25017 / CCUG 19701 / FSC 153 / O#319-036).